Here is a 116-residue protein sequence, read N- to C-terminus: Large ribosomal subunit protein bL17 (116 aa).

Belongs to the bacterial ribosomal protein bL17 family. In terms of assembly, part of the 50S ribosomal subunit. Contacts protein L32.

The sequence is that of Large ribosomal subunit protein bL17 from Dictyoglomus turgidum (strain DSM 6724 / Z-1310).